Reading from the N-terminus, the 290-residue chain is ATP synthase gamma chain (290 aa).

The protein belongs to the ATPase gamma chain family. In terms of assembly, F-type ATPases have 2 components, CF(1) - the catalytic core - and CF(0) - the membrane proton channel. CF(1) has five subunits: alpha(3), beta(3), gamma(1), delta(1), epsilon(1). CF(0) has three main subunits: a, b and c.

It is found in the cell inner membrane. Produces ATP from ADP in the presence of a proton gradient across the membrane. The gamma chain is believed to be important in regulating ATPase activity and the flow of protons through the CF(0) complex. The sequence is that of ATP synthase gamma chain from Bacteroides fragilis (strain ATCC 25285 / DSM 2151 / CCUG 4856 / JCM 11019 / LMG 10263 / NCTC 9343 / Onslow / VPI 2553 / EN-2).